Consider the following 244-residue polypeptide: DNA polymerase sliding clamp (244 aa).

This sequence belongs to the PCNA family. As to quaternary structure, homotrimer. The subunits circularize to form a toroid; DNA passes through its center. Replication factor C (RFC) is required to load the toroid on the DNA.

Sliding clamp subunit that acts as a moving platform for DNA processing. Responsible for tethering the catalytic subunit of DNA polymerase and other proteins to DNA during high-speed replication. This chain is DNA polymerase sliding clamp, found in Methanobrevibacter smithii (strain ATCC 35061 / DSM 861 / OCM 144 / PS).